Here is a 241-residue protein sequence, read N- to C-terminus: Xyloglucan-specific endo-beta-1,4-glucanase A (241 aa).

The first 16 residues, 1-16 (MKVLALSALLSLASAA), serve as a signal peptide directing secretion. Residue Asn47 is glycosylated (N-linked (GlcNAc...) asparagine).

The protein belongs to the glycosyl hydrolase 12 (cellulase H) family.

The protein resides in the secreted. It carries out the reaction xyloglucan + H2O = xyloglucan oligosaccharides.. Catalyzes endohydrolysis of 1,4-beta-D-glucosidic linkages in xyloglucan with retention of the beta-configuration of the glycosyl residues. Specific for xyloglucan and does not hydrolyze other cell wall components. In Aspergillus niger, this protein is Xyloglucan-specific endo-beta-1,4-glucanase A (xgeA).